Consider the following 981-residue polypeptide: Isoleucine--tRNA ligase (981 aa).

The 'HIGH' region signature appears at 50–60 (PTTNGMPHVGH). The 'KMSKS' region motif lies at 604-608 (KMSKS). An ATP-binding site is contributed by K607.

It belongs to the class-I aminoacyl-tRNA synthetase family. IleS type 2 subfamily. Monomer. It depends on Zn(2+) as a cofactor.

Its subcellular location is the cytoplasm. It catalyses the reaction tRNA(Ile) + L-isoleucine + ATP = L-isoleucyl-tRNA(Ile) + AMP + diphosphate. Functionally, catalyzes the attachment of isoleucine to tRNA(Ile). As IleRS can inadvertently accommodate and process structurally similar amino acids such as valine, to avoid such errors it has two additional distinct tRNA(Ile)-dependent editing activities. One activity is designated as 'pretransfer' editing and involves the hydrolysis of activated Val-AMP. The other activity is designated 'posttransfer' editing and involves deacylation of mischarged Val-tRNA(Ile). The polypeptide is Isoleucine--tRNA ligase (Pyrobaculum aerophilum (strain ATCC 51768 / DSM 7523 / JCM 9630 / CIP 104966 / NBRC 100827 / IM2)).